We begin with the raw amino-acid sequence, 295 residues long: Ribosomal RNA small subunit methyltransferase A (295 aa).

Asn-31, Leu-33, Gly-58, Glu-79, Asp-104, and Asn-129 together coordinate S-adenosyl-L-methionine.

It belongs to the class I-like SAM-binding methyltransferase superfamily. rRNA adenine N(6)-methyltransferase family. RsmA subfamily.

It localises to the cytoplasm. It catalyses the reaction adenosine(1518)/adenosine(1519) in 16S rRNA + 4 S-adenosyl-L-methionine = N(6)-dimethyladenosine(1518)/N(6)-dimethyladenosine(1519) in 16S rRNA + 4 S-adenosyl-L-homocysteine + 4 H(+). Its function is as follows. Specifically dimethylates two adjacent adenosines (A1518 and A1519) in the loop of a conserved hairpin near the 3'-end of 16S rRNA in the 30S particle. May play a critical role in biogenesis of 30S subunits. This is Ribosomal RNA small subunit methyltransferase A from Enterococcus faecalis (strain ATCC 700802 / V583).